Here is a 657-residue protein sequence, read N- to C-terminus: UvrABC system protein B (657 aa).

The region spanning 24–409 (AGVRNQVKSQ…SGHIVQQIIR (386 aa)) is the Helicase ATP-binding domain. An ATP-binding site is contributed by 37–44 (GTTGSGKT). Positions 90–113 (YYDYYQPEAYIARSDTYIEKSLLI) match the Beta-hairpin motif. Residues 426-589 (QVDDLLEEIR…IVPKPIIKAI (164 aa)) form the Helicase C-terminal domain. The UVR domain occupies 617–652 (EEQIKKYEALMQRAAKEFRFNEAAKYRDAMQACKEQ).

This sequence belongs to the UvrB family. In terms of assembly, forms a heterotetramer with UvrA during the search for lesions. Interacts with UvrC in an incision complex.

The protein localises to the cytoplasm. Its function is as follows. The UvrABC repair system catalyzes the recognition and processing of DNA lesions. A damage recognition complex composed of 2 UvrA and 2 UvrB subunits scans DNA for abnormalities. Upon binding of the UvrA(2)B(2) complex to a putative damaged site, the DNA wraps around one UvrB monomer. DNA wrap is dependent on ATP binding by UvrB and probably causes local melting of the DNA helix, facilitating insertion of UvrB beta-hairpin between the DNA strands. Then UvrB probes one DNA strand for the presence of a lesion. If a lesion is found the UvrA subunits dissociate and the UvrB-DNA preincision complex is formed. This complex is subsequently bound by UvrC and the second UvrB is released. If no lesion is found, the DNA wraps around the other UvrB subunit that will check the other stand for damage. The chain is UvrABC system protein B from Chlamydia pneumoniae (Chlamydophila pneumoniae).